A 314-amino-acid chain; its full sequence is Vacuolar membrane protein FOSTERSB_4073 (314 aa).

The segment at 32–60 (KPTSSVVSETSSKSLPSLTSSAFSTSSGA) is disordered. Residues 93-113 (VYIAVGAVIGAIFISILIWWL) form a helical membrane-spanning segment. 3 positions are modified to phosphoserine: serine 148, serine 254, and serine 274. The disordered stretch occupies residues 240-309 (EERKLNLNRP…PSMFLDDVLN (70 aa)). Residues 254–269 (SPERKEKKINSMEGYH) are compositionally biased toward basic and acidic residues.

This sequence belongs to the PRM5 family.

The protein resides in the vacuole membrane. This is Vacuolar membrane protein FOSTERSB_4073 from Saccharomyces cerevisiae (strain FostersB) (Baker's yeast).